A 259-amino-acid chain; its full sequence is Imidazole glycerol phosphate synthase subunit HisF (259 aa).

Catalysis depends on residues aspartate 11 and aspartate 130.

The protein belongs to the HisA/HisF family. In terms of assembly, heterodimer of HisH and HisF.

The protein localises to the cytoplasm. It catalyses the reaction 5-[(5-phospho-1-deoxy-D-ribulos-1-ylimino)methylamino]-1-(5-phospho-beta-D-ribosyl)imidazole-4-carboxamide + L-glutamine = D-erythro-1-(imidazol-4-yl)glycerol 3-phosphate + 5-amino-1-(5-phospho-beta-D-ribosyl)imidazole-4-carboxamide + L-glutamate + H(+). Its pathway is amino-acid biosynthesis; L-histidine biosynthesis; L-histidine from 5-phospho-alpha-D-ribose 1-diphosphate: step 5/9. IGPS catalyzes the conversion of PRFAR and glutamine to IGP, AICAR and glutamate. The HisF subunit catalyzes the cyclization activity that produces IGP and AICAR from PRFAR using the ammonia provided by the HisH subunit. This is Imidazole glycerol phosphate synthase subunit HisF from Desulforapulum autotrophicum (strain ATCC 43914 / DSM 3382 / VKM B-1955 / HRM2) (Desulfobacterium autotrophicum).